Consider the following 119-residue polypeptide: Large ribosomal subunit protein uL18 (119 aa).

The span at 1-10 (MKKIKEAEQR) shows a compositional bias: basic and acidic residues. Positions 1–20 (MKKIKEAEQRKLRRKKRIKD) are disordered.

This sequence belongs to the universal ribosomal protein uL18 family. In terms of assembly, part of the 50S ribosomal subunit; part of the 5S rRNA/L5/L18/L25 subcomplex. Contacts the 5S and 23S rRNAs.

Its function is as follows. This is one of the proteins that bind and probably mediate the attachment of the 5S RNA into the large ribosomal subunit, where it forms part of the central protuberance. The polypeptide is Large ribosomal subunit protein uL18 (Borreliella burgdorferi (strain ATCC 35210 / DSM 4680 / CIP 102532 / B31) (Borrelia burgdorferi)).